The chain runs to 395 residues: 8-amino-7-oxononanoate synthase/2-amino-3-ketobutyrate coenzyme A ligase (395 aa).

Pyridoxal 5'-phosphate is bound at residue 110-111 (GF). A substrate-binding site is contributed by His-135. Residues Ser-182, 207-210 (DDAH), and 239-242 (TLSK) contribute to the pyridoxal 5'-phosphate site. Lys-242 carries the N6-(pyridoxal phosphate)lysine modification. Position 356 (Thr-356) interacts with substrate.

Belongs to the class-II pyridoxal-phosphate-dependent aminotransferase family. Homodimer. Pyridoxal 5'-phosphate serves as cofactor.

It carries out the reaction 6-carboxyhexanoyl-[ACP] + L-alanine + H(+) = (8S)-8-amino-7-oxononanoate + holo-[ACP] + CO2. The catalysed reaction is glycine + acetyl-CoA = (2S)-2-amino-3-oxobutanoate + CoA. It participates in cofactor biosynthesis; biotin biosynthesis. Catalyzes the decarboxylative condensation of pimeloyl-[acyl-carrier protein] and L-alanine to produce 8-amino-7-oxononanoate (AON), [acyl-carrier protein], and carbon dioxide. Can also use pimeloyl-CoA instead of pimeloyl-ACP as substrate. It also converts 2-amino-3-ketobutyrate and CoA to glycine and acetyl-CoA. Activity is also observed with the following combinations of substrates: acetyl-CoA and either L-alanine or L-serine, pimeloyl-CoA and either glycine or L-serine, and palmitoyl-CoA with L-alanine. This is 8-amino-7-oxononanoate synthase/2-amino-3-ketobutyrate coenzyme A ligase from Thermus thermophilus (strain ATCC 27634 / DSM 579 / HB8).